The primary structure comprises 212 residues: ATP-dependent dethiobiotin synthetase BioD (212 aa).

Position 13–18 (13–18) interacts with ATP; that stretch reads GIGKTV. A Mg(2+)-binding site is contributed by threonine 17. Lysine 33 is a catalytic residue. A substrate-binding site is contributed by serine 37. Glutamate 100 contributes to the Mg(2+) binding site. ATP contacts are provided by residues 100 to 103 and 184 to 186; these read EGAG and PLL.

Belongs to the dethiobiotin synthetase family. Homodimer. It depends on Mg(2+) as a cofactor.

Its subcellular location is the cytoplasm. The catalysed reaction is (7R,8S)-7,8-diammoniononanoate + CO2 + ATP = (4R,5S)-dethiobiotin + ADP + phosphate + 3 H(+). Its pathway is cofactor biosynthesis; biotin biosynthesis; biotin from 7,8-diaminononanoate: step 1/2. Functionally, catalyzes a mechanistically unusual reaction, the ATP-dependent insertion of CO2 between the N7 and N8 nitrogen atoms of 7,8-diaminopelargonic acid (DAPA, also called 7,8-diammoniononanoate) to form a ureido ring. The polypeptide is ATP-dependent dethiobiotin synthetase BioD (Brucella canis (strain ATCC 23365 / NCTC 10854 / RM-666)).